A 217-amino-acid polypeptide reads, in one-letter code: Ran-binding protein 1 homolog b (217 aa).

2 disordered regions span residues 1–32 (MASISNEPERENRDEEETGANEDEDTGAQVAP) and 160–217 (ESEE…VPSA). A2 bears the N-acetylalanine mark. Over residues 14–26 (DEEETGANEDEDT) the composition is skewed to acidic residues. Residues 29–164 (QVAPIVRLEE…FKEVAESEEE (136 aa)) form the RanBD1 domain. The segment covering 181–217 (LTVEEKESEKKPVEKAEENKKSEAVEEKKTEESVPSA) has biased composition (basic and acidic residues).

In terms of assembly, interacts with the GTP-bound form of RAN1, RAN2 and RAN3.

Its subcellular location is the nucleus. The protein resides in the nuclear pore complex. In Arabidopsis thaliana (Mouse-ear cress), this protein is Ran-binding protein 1 homolog b (RANBP1B).